Consider the following 201-residue polypeptide: Small ribosomal subunit protein uS4c (201 aa).

The disordered stretch occupies residues 20-44 (GLTSKRPRAGSDLRNQSRSGKKSQY). An S4 RNA-binding domain is found at 89-152 (MRLDNILFRL…NSRTLVQNLL (64 aa)).

This sequence belongs to the universal ribosomal protein uS4 family. As to quaternary structure, part of the 30S ribosomal subunit. Contacts protein S5. The interaction surface between S4 and S5 is involved in control of translational fidelity.

The protein localises to the plastid. It localises to the chloroplast. Its function is as follows. One of the primary rRNA binding proteins, it binds directly to 16S rRNA where it nucleates assembly of the body of the 30S subunit. Functionally, with S5 and S12 plays an important role in translational accuracy. The sequence is that of Small ribosomal subunit protein uS4c (rps4) from Arabis hirsuta (Hairy rock-cress).